The following is a 616-amino-acid chain: MSPNDAFISAPAKIETPVGPRNEGQPAWNKQRGSSMPVNRYMPFEVEVEDISLPDRTWPDKKITVAPQWCAVDLRDGNQALIDPMSPERKRRMFELLVQMGFKEIEVGFPSASQTDFDFVREIIEKGMIPDDVTIQVLVQAREHLIRRTFEACEGAKNVIVHFYNSTSILQRNVVFRMDKVQVKKLATDAAELIKTIAQDYPDTNWRWQYSPESFTGTEVEYAKEVVDAVVEVMDPTPENPMIINLPSTVEMITPNVYADSIEWMHRNLNRRDSIILSLHPHNDRGTGVGAAELGYMAGADRIEGCLFGNGERTGNVCLVTLALNMLTQGVDPQLDFTDIRQIRSTVEYCNQLRVPERHPYGGDLVFTAFSGSHQDAVNKGLDAMAAKVQPGASSTEVSWEQLRDTEWEVPYLPIDPKDVGRDYEAVIRVNSQSGKGGVAYIMKTDHGLQIPRSMQVEFSTVVQNVTDAEGGEVNSKAMWDIFATEYLERTAPVEQIALRVENAQTENEDASITAELIHNGKDVTVDGRGNGPLAAYANALEKLGIDVEIQEYNQHARTSGDDAEAAAYVLAEVNGRKVWGVGIAGSITYASLKAVTSAVNRALDVNHEAVLAGGV.

A disordered region spans residues 1–34 (MSPNDAFISAPAKIETPVGPRNEGQPAWNKQRGS). Residues 67–341 (PQWCAVDLRD…DPQLDFTDIR (275 aa)) form the Pyruvate carboxyltransferase domain. 4 residues coordinate Mg(2+): D76, H280, H282, and N316. Residues 490–616 (RTAPVEQIAL…NHEAVLAGGV (127 aa)) are regulatory domain.

Belongs to the alpha-IPM synthase/homocitrate synthase family. LeuA type 2 subfamily. In terms of assembly, homodimer. It depends on Mg(2+) as a cofactor.

The protein localises to the cytoplasm. The catalysed reaction is 3-methyl-2-oxobutanoate + acetyl-CoA + H2O = (2S)-2-isopropylmalate + CoA + H(+). The protein operates within amino-acid biosynthesis; L-leucine biosynthesis; L-leucine from 3-methyl-2-oxobutanoate: step 1/4. With respect to regulation, inhibited by L-leucine, the pathway end product. Functionally, catalyzes the condensation of the acetyl group of acetyl-CoA with 3-methyl-2-oxobutanoate (2-ketoisovalerate) to form 3-carboxy-3-hydroxy-4-methylpentanoate (2-isopropylmalate). Complements an E.coli leuA deletion. The protein is 2-isopropylmalate synthase of Corynebacterium glutamicum (strain ATCC 13032 / DSM 20300 / JCM 1318 / BCRC 11384 / CCUG 27702 / LMG 3730 / NBRC 12168 / NCIMB 10025 / NRRL B-2784 / 534).